We begin with the raw amino-acid sequence, 451 residues long: Endosomal transmembrane epsin interactor 1 (451 aa).

Residues 1-29 form the signal peptide; sequence MILLVNLFVLLSVVCILLNLAGFILGCQG. Residues 30-85 are Lumenal-facing; the sequence is AQFVSSVPRCDLVDLGEGKICFCCEEFQPAKCTDKENALKLFPVQPCSAVHLLLKK. The helical transmembrane segment at 86–106 threads the bilayer; the sequence is VLFALCALNALTTTVCLVAAA. Residues 107–451 lie on the Cytoplasmic side of the membrane; that stretch reads LRYLQIFASR…LIGVIRETVL (345 aa). A mediates interaction with EPN1 region spans residues 107-451; sequence LRYLQIFASR…LIGVIRETVL (345 aa). 2 short sequence motifs (PPxY; mediates interaction with ITCH) span residues 148–151 and 194–197; these read PPSY and PPPY. Residues 204 to 213 are compositionally biased toward polar residues; it reads TDQEQESSFQ. The tract at residues 204–224 is disordered; sequence TDQEQESSFQMPEGPETAASP. A Glycyl lysine isopeptide (Lys-Gly) (interchain with G-Cter in ubiquitin) cross-link involves residue Lys274. Phosphoserine is present on Ser275. Lys365 participates in a covalent cross-link: Glycyl lysine isopeptide (Lys-Gly) (interchain with G-Cter in ubiquitin).

Belongs to the ENTREP family. In terms of assembly, interacts with ITCH; enhances the ubiquitination of CXCR4 by ITCH and the subsequent endocytosis and desensitization of the receptor. Interacts with EPN1.

It is found in the early endosome membrane. Its subcellular location is the late endosome membrane. The protein resides in the recycling endosome membrane. The protein localises to the cell membrane. Its function is as follows. Functions as an activator of the E3 ubiquitin protein ligase ITCH in the ubiquitination of the CXCL12-activated CXCR4 receptor. Thereby, triggers CXCR4 endocytosis and desensitization, negatively regulating the CXCL12/CXCR4 signaling pathway. The chain is Endosomal transmembrane epsin interactor 1 from Mus musculus (Mouse).